Reading from the N-terminus, the 437-residue chain is 23S rRNA (uracil(1939)-C(5))-methyltransferase RlmD (437 aa).

The TRAM domain occupies 10 to 68 (SAPRNTTFVAEILDLDYQGRGVAKVQGKTWFIENALPQEKVEVRIVDEKRHYGHGISCK). Positions 81, 87, 90, and 167 each coordinate [4Fe-4S] cluster. Residues Q270, F299, N304, E320, N347, and D368 each contribute to the S-adenosyl-L-methionine site. The active-site Nucleophile is C394.

It belongs to the class I-like SAM-binding methyltransferase superfamily. RNA M5U methyltransferase family. RlmD subfamily.

It carries out the reaction uridine(1939) in 23S rRNA + S-adenosyl-L-methionine = 5-methyluridine(1939) in 23S rRNA + S-adenosyl-L-homocysteine + H(+). Catalyzes the formation of 5-methyl-uridine at position 1939 (m5U1939) in 23S rRNA. This Pasteurella multocida (strain Pm70) protein is 23S rRNA (uracil(1939)-C(5))-methyltransferase RlmD.